The chain runs to 375 residues: MDVEKKIELIKKKPTEELLTEENLRHLFEVGIPMQHYIGFEISGYIHLGTGLMAGAKIADLQKAGIKTRIFLADWHSWINDKLGGDLETIQKVALTYFKEGMKQSIKVMGGDPDKVEFVLASEILEKGDYWQTVIDISKNVTLARMMRSITIMGRQMGESIDFAKLIYPAMQVADIFYQGVTIAHAGMDQRKAHVIAIEVAQKLKYHPLEWKGEKLKPVALHHHLLLGLQEPPVWPIESEEQFKELKTQMKMSKSKPYSAVFIHDSPEEIRQKLRKAFCPAREVRYNPVLDWAEYIIFREEPTEFTIHRPAKFGGDVTYTTSEELKRDFAEGKLHPLDLKNAVAEYLIELLKPVREYFEKHPEPLELMREVKITR.

L-tyrosine is bound by residues Tyr37, Tyr168, Gln172, Asp175, and Gln190. Positions Lys251–Ser255 match the 'KMSKS' region motif. Residue Lys254 participates in ATP binding.

The protein belongs to the class-I aminoacyl-tRNA synthetase family. TyrS type 4 subfamily. As to quaternary structure, homodimer.

It localises to the cytoplasm. The enzyme catalyses tRNA(Tyr) + L-tyrosine + ATP = L-tyrosyl-tRNA(Tyr) + AMP + diphosphate + H(+). Functionally, catalyzes the attachment of tyrosine to tRNA(Tyr) in a two-step reaction: tyrosine is first activated by ATP to form Tyr-AMP and then transferred to the acceptor end of tRNA(Tyr). This Thermococcus gammatolerans (strain DSM 15229 / JCM 11827 / EJ3) protein is Tyrosine--tRNA ligase.